A 639-amino-acid chain; its full sequence is Mediator of RNA polymerase II transcription subunit 17 (639 aa).

The protein belongs to the Mediator complex subunit 17 family. In terms of assembly, component of the Mediator complex.

It is found in the nucleus. Functionally, component of the Mediator complex, a coactivator involved in the regulated transcription of nearly all RNA polymerase II-dependent genes. Mediator functions as a bridge to convey information from gene-specific regulatory proteins to the basal RNA polymerase II transcription machinery. Mediator is recruited to promoters by direct interactions with regulatory proteins and serves as a scaffold for the assembly of a functional preinitiation complex with RNA polymerase II and the general transcription factors. The protein is Mediator of RNA polymerase II transcription subunit 17 (med17) of Xenopus tropicalis (Western clawed frog).